Here is a 247-residue protein sequence, read N- to C-terminus: Acetoacetate decarboxylase (247 aa).

Residue lysine 116 is the Schiff-base intermediate with acetoacetate of the active site.

Belongs to the ADC family.

The catalysed reaction is acetoacetate + H(+) = acetone + CO2. Catalyzes the conversion of acetoacetate to acetone and carbon dioxide. This Ralstonia nicotianae (strain ATCC BAA-1114 / GMI1000) (Ralstonia solanacearum) protein is Acetoacetate decarboxylase.